The chain runs to 337 residues: GDP-mannose transporter 1 (337 aa).

At 1 to 16 the chain is on the cytoplasmic side; the sequence is MSELKTGHAGHNPWAS. Residues 17–37 traverse the membrane as a helical segment; it reads VANSGPISILSYCGSSILMTV. At 38–51 the chain is on the lumenal side; sequence TNKFVVNLKDFNMN. The chain crosses the membrane as a helical span at residues 52-72; sequence FVMLFVQSLVCTITLIILRIL. Residues 73 to 92 are Cytoplasmic-facing; the sequence is GYAKFRSLNKTDAKNWFPIS. Residues 93 to 113 form a helical membrane-spanning segment; the sequence is FLLVLMIYTSSKALQYLAVPI. Over 114-119 the chain is Lumenal; the sequence is YTIFKN. N-linked (GlcNAc...) asparagine glycosylation is present at Asn119. A helical transmembrane segment spans residues 120-140; the sequence is LTIILIAYGEVLFFGGSVTSM. Topologically, residues 141–144 are cytoplasmic; it reads ELSS. A helical transmembrane segment spans residues 145-165; it reads FLLMVLSSVVATWGDQQAVAA. At 166 to 180 the chain is on the lumenal side; that stretch reads KAASLAEGAAGAVAS. Residues 181-201 traverse the membrane as a helical segment; sequence FNPGYFWMFTNCITSALFVLI. Residues 202 to 215 lie on the Cytoplasmic side of the membrane; that stretch reads MRKRIKLTNFKDFD. Residues 216–236 traverse the membrane as a helical segment; sequence TMFYNNVLALPILLLFSFCVE. Residues 237 to 252 lie on the Lumenal side of the membrane; sequence DWSSVNLTNNFSNDSL. Residues Asn242, Asn246, and Asn249 are each glycosylated (N-linked (GlcNAc...) asparagine). The helical transmembrane segment at 253 to 273 threads the bilayer; sequence TAMIISGVASVGISYCSGWCV. Residues 274–279 are Cytoplasmic-facing; that stretch reads RVTSST. The helical transmembrane segment at 280–300 threads the bilayer; that stretch reads TYSMVGALNKLPIALSGLIFF. The Lumenal segment spans residues 301-304; it reads DAPR. Residues 305–325 traverse the membrane as a helical segment; that stretch reads NFLSILSIFIGFLSGIIYAVA. Topologically, residues 326 to 337 are cytoplasmic; that stretch reads KQKKQQAQPLRK.

This sequence belongs to the TPT transporter family. SLC35D subfamily. Homooligomer.

The protein localises to the golgi apparatus membrane. The protein resides in the cytoplasmic vesicle membrane. It localises to the endoplasmic reticulum membrane. Its function is as follows. Involved in the import of GDP-mannose from the cytoplasm into the Golgi lumen. Defective copy causes severe glycosylation defect and abnormal retention of soluble endoplasmic reticulum proteins. Involved in vanadate sensitivity. This Saccharomyces cerevisiae (strain YJM789) (Baker's yeast) protein is GDP-mannose transporter 1 (VRG4).